A 516-amino-acid chain; its full sequence is Chromosomal replication initiator protein DnaA (516 aa).

The domain I, interacts with DnaA modulators stretch occupies residues 1–72 (MSLEHWNLCL…LLSEFAGDDL (72 aa)). The tract at residues 72–179 (LAPALKLAVK…QVEGGINHGA (108 aa)) is domain II. The domain III, AAA+ region stretch occupies residues 180-396 (NLNNSFTFDN…GALKRVIANS (217 aa)). Residues Gly224, Gly226, Lys227, and Thr228 each coordinate ATP. Positions 397–516 (HFTGRAITPD…YKQLMRILTT (120 aa)) are domain IV, binds dsDNA.

The protein belongs to the DnaA family. As to quaternary structure, oligomerizes as a right-handed, spiral filament on DNA at oriC.

The protein localises to the cytoplasm. Its function is as follows. Plays an essential role in the initiation and regulation of chromosomal replication. ATP-DnaA binds to the origin of replication (oriC) to initiate formation of the DNA replication initiation complex once per cell cycle. Binds the DnaA box (a 9 base pair repeat at the origin) and separates the double-stranded (ds)DNA. Forms a right-handed helical filament on oriC DNA; dsDNA binds to the exterior of the filament while single-stranded (ss)DNA is stabiized in the filament's interior. The ATP-DnaA-oriC complex binds and stabilizes one strand of the AT-rich DNA unwinding element (DUE), permitting loading of DNA polymerase. After initiation quickly degrades to an ADP-DnaA complex that is not apt for DNA replication. Binds acidic phospholipids. The chain is Chromosomal replication initiator protein DnaA from Marinomonas sp. (strain MWYL1).